A 211-amino-acid polypeptide reads, in one-letter code: Protein-methionine-sulfoxide reductase heme-binding subunit MsrQ (211 aa).

The next 6 helical transmembrane spans lie at 10-30 (WLKVCLHLAGLLPFLWLVWAI), 54-74 (FLLAALLITPLARYAKQPLLI), 82-102 (LWCFAWATLHLTSYALLELGV), 116-136 (PYLTLGIISWVILLALAFTST), 153-173 (FVYLVAILAPIHYLWSVKIIS), and 178-198 (IYAGLAVLLLALRYKKLLSLF).

It belongs to the MsrQ family. As to quaternary structure, heterodimer of a catalytic subunit (MsrP) and a heme-binding subunit (MsrQ). FMN serves as cofactor. Heme b is required as a cofactor.

The protein resides in the cell inner membrane. Functionally, part of the MsrPQ system that repairs oxidized periplasmic proteins containing methionine sulfoxide residues (Met-O), using respiratory chain electrons. Thus protects these proteins from oxidative-stress damage caused by reactive species of oxygen and chlorine generated by the host defense mechanisms. MsrPQ is essential for the maintenance of envelope integrity under bleach stress, rescuing a wide series of structurally unrelated periplasmic proteins from methionine oxidation, including the primary periplasmic chaperone SurA and the lipoprotein Pal. MsrQ provides electrons for reduction to the reductase catalytic subunit MsrP, using the quinone pool of the respiratory chain. The protein is Protein-methionine-sulfoxide reductase heme-binding subunit MsrQ of Escherichia coli O6:H1 (strain CFT073 / ATCC 700928 / UPEC).